Here is a 304-residue protein sequence, read N- to C-terminus: Dihydroorotate dehydrogenase B (NAD(+)), catalytic subunit (304 aa).

FMN is bound by residues S20 and 44–45 (KA). Residues K44 and 68-72 (NAIGL) contribute to the substrate site. 2 residues coordinate FMN: N98 and N126. N126 contributes to the substrate binding site. The active-site Nucleophile is the C129. Positions 164 and 190 each coordinate FMN. 191 to 192 (NT) provides a ligand contact to substrate. FMN is bound by residues G216, 242-243 (GG), and 264-265 (GT).

It belongs to the dihydroorotate dehydrogenase family. Type 1 subfamily. As to quaternary structure, heterotetramer of 2 PyrK and 2 PyrD type B subunits. The cofactor is FMN.

Its subcellular location is the cytoplasm. It catalyses the reaction (S)-dihydroorotate + NAD(+) = orotate + NADH + H(+). It functions in the pathway pyrimidine metabolism; UMP biosynthesis via de novo pathway; orotate from (S)-dihydroorotate (NAD(+) route): step 1/1. In terms of biological role, catalyzes the conversion of dihydroorotate to orotate with NAD(+) as electron acceptor. This is Dihydroorotate dehydrogenase B (NAD(+)), catalytic subunit (pyrD) from Oceanobacillus iheyensis (strain DSM 14371 / CIP 107618 / JCM 11309 / KCTC 3954 / HTE831).